The following is a 497-amino-acid chain: WASH complex subunit homolog 1 (497 aa).

The tract at residues glutamate 306–aspartate 497 is disordered. A compositionally biased stretch (pro residues) spans leucine 323–alanine 339. Over residues threonine 341–proline 350 the composition is skewed to low complexity. Positions isoleucine 351–threonine 372 are enriched in pro residues. The 23-residue stretch at glycine 390 to isoleucine 412 folds into the WH2 domain.

Belongs to the WASH1 family. In terms of assembly, component of the WASH core complex. Component of the DHIC (ddl-1-containing hsf-1 inhibitory) complex, which contains at least ddl-1, ddl-2, hsb-1 and hsf-1. Within the complex, interacts with ddl-1. Formation of the DHIC may be dependent upon the Insulin/IGF-1-like signaling (IIS) mediated pathway. Expressed in several neurons located throughout the body.

Acts as a component of the WASH core complex that functions as a nucleation-promoting factor (NPF) at the surface of endosomes, where it recruits and activates the Arp2/3 complex to induce actin polymerization, playing a key role in the fission of tubules that serve as transport intermediates during endosome sorting. Acts as a component of the DHIC (ddl-1-containing hsf-1 inhibitory complex) which modulates lifespan by sequestering the heat shock transcription factor hsf-1 to negatively regulate its binding to DNA and its transcriptional activity. This Caenorhabditis elegans protein is WASH complex subunit homolog 1.